We begin with the raw amino-acid sequence, 261 residues long: 3-hydroxyacyl-CoA dehydrogenase type-2 (261 aa).

Residue Ala-2 is modified to N-acetylalanine. 2 residues coordinate NAD(+): Ser-20 and Asp-41. Position 53 is an N6-acetyllysine; alternate (Lys-53). Position 53 is an N6-succinyllysine; alternate (Lys-53). Val-65 serves as a coordination point for NAD(+). Lys-69 carries the post-translational modification N6-acetyllysine. Cys-91 lines the NAD(+) pocket. An N6-acetyllysine mark is found at Lys-99 and Lys-105. At Lys-107 the chain carries N6-acetyllysine; alternate. Lys-107 is subject to N6-succinyllysine; alternate. Ser-155 provides a ligand contact to substrate. Residues Tyr-168, Lys-172, Phe-201, and Thr-203 each coordinate NAD(+). The active-site Proton acceptor is Tyr-168. Lys-212 bears the N6-acetyllysine; alternate mark. Lys-212 is modified (N6-succinyllysine; alternate).

The protein belongs to the short-chain dehydrogenases/reductases (SDR) family. Homotetramer. Component of mitochondrial ribonuclease P, a complex composed of TRMT10C/MRPP1, HSD17B10/MRPP2 and PRORP/MRPP3. Interacts with TRMT10C/MRPP1; forming the MRPP1-MRPP2 subcomplex of the mitochondrial ribonuclease P complex.

The protein localises to the mitochondrion. It localises to the mitochondrion matrix. The protein resides in the mitochondrion nucleoid. It catalyses the reaction a (3S)-3-hydroxyacyl-CoA + NAD(+) = a 3-oxoacyl-CoA + NADH + H(+). It carries out the reaction (2S,3S)-3-hydroxy-2-methylbutanoyl-CoA + NAD(+) = 2-methyl-3-oxobutanoyl-CoA + NADH + H(+). The enzyme catalyses testosterone + NAD(+) = androst-4-ene-3,17-dione + NADH + H(+). The catalysed reaction is 5alpha-androstane-3alpha,17beta-diol + NAD(+) = 17beta-hydroxy-5alpha-androstan-3-one + NADH + H(+). It catalyses the reaction 17beta-estradiol + NAD(+) = estrone + NADH + H(+). It carries out the reaction cholate + NAD(+) = 3alpha,12alpha-dihydroxy-7-oxo-5beta-cholanate + NADH + H(+). The enzyme catalyses (3S)-3-hydroxybutanoyl-CoA + NAD(+) = acetoacetyl-CoA + NADH + H(+). The catalysed reaction is (3S)-hydroxyoctanoyl-CoA + NAD(+) = 3-oxooctanoyl-CoA + NADH + H(+). It catalyses the reaction (3S)-hydroxyhexadecanoyl-CoA + NAD(+) = 3-oxohexadecanoyl-CoA + NADH + H(+). It carries out the reaction 17beta-hydroxy-5alpha-androstan-3-one + NAD(+) = 5alpha-androstan-3,17-dione + NADH + H(+). The enzyme catalyses 5alpha-pregnan-20beta-ol-3-one + NAD(+) = 5alpha-pregnane-3,20-dione + NADH + H(+). The catalysed reaction is 3alpha-hydroxy-5alpha-pregnan-20-one + NAD(+) = 5alpha-pregnane-3,20-dione + NADH + H(+). It catalyses the reaction cortisone + NAD(+) = 17alpha-hydroxypregn-4-en-3,11,20-trione-21-al + NADH + H(+). It carries out the reaction 11-dehydrocorticosterone + NAD(+) = pregn-4-ene-3,11,20,21-tetraone + NADH + H(+). The enzyme catalyses cortisol + NAD(+) = 11beta,17alpha-dihydroxypregn-4-ene-3,20,21-trione + NADH + H(+). The catalysed reaction is chenodeoxycholate + NAD(+) = 7-oxolithocholate + NADH + H(+). It catalyses the reaction ursodeoxycholate + NAD(+) = 7-oxolithocholate + NADH + H(+). It carries out the reaction 3beta,7beta-dihydroxy-5beta-cholan-24-oate + NAD(+) = 3beta-hydroxy-7-oxo-5beta-cholan-24-oate + NADH + H(+). Its pathway is amino-acid degradation; L-isoleucine degradation. It participates in lipid metabolism; fatty acid beta-oxidation. It functions in the pathway steroid metabolism. The protein operates within lipid metabolism; bile acid biosynthesis. Functionally, mitochondrial dehydrogenase involved in pathways of fatty acid, branched-chain amino acid and steroid metabolism. Acts as (S)-3-hydroxyacyl-CoA dehydrogenase in mitochondrial fatty acid beta-oxidation, a major degradation pathway of fatty acids. Catalyzes the third step in the beta-oxidation cycle, namely the reversible conversion of (S)-3-hydroxyacyl-CoA to 3-ketoacyl-CoA. Preferentially accepts straight medium- and short-chain acyl-CoA substrates with highest efficiency for (3S)-hydroxybutanoyl-CoA. Acts as 3-hydroxy-2-methylbutyryl-CoA dehydrogenase in branched-chain amino acid catabolic pathway. Catalyzes the oxidation of 3-hydroxy-2-methylbutanoyl-CoA into 2-methyl-3-oxobutanoyl-CoA, a step in isoleucine degradation pathway. Has hydroxysteroid dehydrogenase activity toward steroid hormones and bile acids. Catalyzes the oxidation of 3alpha-, 17beta-, 20beta- and 21-hydroxysteroids and 7alpha- and 7beta-hydroxy bile acids. Oxidizes allopregnanolone/brexanolone at the 3alpha-hydroxyl group, which is known to be critical for the activation of gamma-aminobutyric acid receptors (GABAARs) chloride channel. Has phospholipase C-like activity toward cardiolipin and its oxidized species. Likely oxidizes the 2'-hydroxyl in the head group of cardiolipin to form a ketone intermediate that undergoes nucleophilic attack by water and fragments into diacylglycerol, dihydroxyacetone and orthophosphate. Has higher affinity for cardiolipin with oxidized fatty acids and may degrade these species during the oxidative stress response to protect cells from apoptosis. By interacting with intracellular amyloid-beta, it may contribute to the neuronal dysfunction associated with Alzheimer disease (AD). Essential for structural and functional integrity of mitochondria. Its function is as follows. In addition to mitochondrial dehydrogenase activity, moonlights as a component of mitochondrial ribonuclease P, a complex that cleaves tRNA molecules in their 5'-ends. Together with TRMT10C/MRPP1, forms a subcomplex of the mitochondrial ribonuclease P, named MRPP1-MRPP2 subcomplex, which displays functions that are independent of the ribonuclease P activity. The MRPP1-MRPP2 subcomplex catalyzes the formation of N(1)-methylguanine and N(1)-methyladenine at position 9 (m1G9 and m1A9, respectively) in tRNAs; HSD17B10/MRPP2 acting as a non-catalytic subunit. The MRPP1-MRPP2 subcomplex also acts as a tRNA maturation platform: following 5'-end cleavage by the mitochondrial ribonuclease P complex, the MRPP1-MRPP2 subcomplex enhances the efficiency of 3'-processing catalyzed by ELAC2, retains the tRNA product after ELAC2 processing and presents the nascent tRNA to the mitochondrial CCA tRNA nucleotidyltransferase TRNT1 enzyme. Associates with mitochondrial DNA complexes at the nucleoids to initiate RNA processing and ribosome assembly. In Mus musculus (Mouse), this protein is 3-hydroxyacyl-CoA dehydrogenase type-2 (Hsd17b10).